A 215-amino-acid chain; its full sequence is Probable septum site-determining protein MinC (215 aa).

It belongs to the MinC family. In terms of assembly, interacts with MinD and FtsZ.

Cell division inhibitor that blocks the formation of polar Z ring septums. Rapidly oscillates between the poles of the cell to destabilize FtsZ filaments that have formed before they mature into polar Z rings. Prevents FtsZ polymerization. The protein is Probable septum site-determining protein MinC of Clostridium botulinum (strain Alaska E43 / Type E3).